A 211-amino-acid chain; its full sequence is Peptidyl-prolyl cis-trans isomerase-like 3 (211 aa).

The PPIase cyclophilin-type domain occupies 1–204 (MSVTLHTTHG…ETLRINRVTI (204 aa)).

The protein belongs to the cyclophilin-type PPIase family. PPIL3 subfamily.

The enzyme catalyses [protein]-peptidylproline (omega=180) = [protein]-peptidylproline (omega=0). Functionally, PPIases accelerate the folding of proteins. It catalyzes the cis-trans isomerization of proline imidic peptide bonds in oligopeptides. This is Peptidyl-prolyl cis-trans isomerase-like 3 (cyp10) from Emericella nidulans (strain FGSC A4 / ATCC 38163 / CBS 112.46 / NRRL 194 / M139) (Aspergillus nidulans).